A 130-amino-acid chain; its full sequence is 3-aminoacrylate deaminase RutC (130 aa).

This sequence belongs to the RutC family.

It catalyses the reaction (Z)-3-aminoacrylate + H2O + H(+) = 3-oxopropanoate + NH4(+). Functionally, involved in pyrimidine catabolism. Catalyzes the deamination of 3-aminoacrylate to malonic semialdehyde, a reaction that can also occur spontaneously. RutC may facilitate the reaction and modulate the metabolic fitness, rather than catalyzing essential functions. In Haliangium ochraceum (strain DSM 14365 / JCM 11303 / SMP-2), this protein is 3-aminoacrylate deaminase RutC.